Here is a 371-residue protein sequence, read N- to C-terminus: Chaperone protein DnaJ (371 aa).

Positions 5–70 (SYYDILGVSK…KKRQAYDQFG (66 aa)) constitute a J domain. The CR-type zinc finger occupies 139–217 (GREYKIEIPR…CGGQGLQEKR (79 aa)). Cys-152, Cys-155, Cys-169, Cys-172, Cys-191, Cys-194, Cys-205, and Cys-208 together coordinate Zn(2+). 4 CXXCXGXG motif repeats span residues 152–159 (CGDCNGSG), 169–176 (CPDCGGSG), 191–198 (CPTCRGKG), and 205–212 (CKTCGGQG).

This sequence belongs to the DnaJ family. Homodimer. It depends on Zn(2+) as a cofactor.

It localises to the cytoplasm. Participates actively in the response to hyperosmotic and heat shock by preventing the aggregation of stress-denatured proteins and by disaggregating proteins, also in an autonomous, DnaK-independent fashion. Unfolded proteins bind initially to DnaJ; upon interaction with the DnaJ-bound protein, DnaK hydrolyzes its bound ATP, resulting in the formation of a stable complex. GrpE releases ADP from DnaK; ATP binding to DnaK triggers the release of the substrate protein, thus completing the reaction cycle. Several rounds of ATP-dependent interactions between DnaJ, DnaK and GrpE are required for fully efficient folding. Also involved, together with DnaK and GrpE, in the DNA replication of plasmids through activation of initiation proteins. This Leptospira borgpetersenii serovar Hardjo-bovis (strain JB197) protein is Chaperone protein DnaJ.